A 214-amino-acid chain; its full sequence is ATP phosphoribosyltransferase (214 aa).

The protein belongs to the ATP phosphoribosyltransferase family. Short subfamily. Heteromultimer composed of HisG and HisZ subunits.

The protein localises to the cytoplasm. The enzyme catalyses 1-(5-phospho-beta-D-ribosyl)-ATP + diphosphate = 5-phospho-alpha-D-ribose 1-diphosphate + ATP. The protein operates within amino-acid biosynthesis; L-histidine biosynthesis; L-histidine from 5-phospho-alpha-D-ribose 1-diphosphate: step 1/9. Functionally, catalyzes the condensation of ATP and 5-phosphoribose 1-diphosphate to form N'-(5'-phosphoribosyl)-ATP (PR-ATP). Has a crucial role in the pathway because the rate of histidine biosynthesis seems to be controlled primarily by regulation of HisG enzymatic activity. The protein is ATP phosphoribosyltransferase of Nostoc punctiforme (strain ATCC 29133 / PCC 73102).